The sequence spans 274 residues: CDC48-associated ubiquitin-like/zinc finger protein 1 (274 aa).

An AN1-type zinc finger spans residues 12–58; that stretch reads LDVGKHCAYCRQLDFLPFHCSFCNEDFCSNHRLKEDHHCRWLLEHEE. Zn(2+) contacts are provided by Cys-18, Cys-21, Cys-31, Cys-34, Cys-39, His-42, His-48, and Cys-50. Residues 170-266 form a ubiquitin-like region; it reads NRIYIWCYLV…KDLDTLYLVH (97 aa). Ser-273 is subject to Phosphoserine.

Interacts (via its ubiquitin-like domain) with CDC48 (via N-terminus). Associates with the 26S proteasome. Specifically interacts with the regulatory particle (RP) subunit RPN2. Exposure to arsenite, a known inducer of protein misfolding resulting in accumulation of polyubiquitinated conjugates, enhances the association with the proteoasome. Binds to ubiquitinated proteins conjugated to a 4 or more molecule ubiquitin chain. Binding to ubiquitinated proteins is zinc-dependent.

Its subcellular location is the cytoplasm. The protein resides in the nucleus. Promotes efficient arsenite-induced clearance of stress granules (SGs). May have a role in the ubiquitin-proteasome system (UPS) protecting cells from metalloid-induced proteotoxicity. This Saccharomyces cerevisiae (strain ATCC 204508 / S288c) (Baker's yeast) protein is CDC48-associated ubiquitin-like/zinc finger protein 1.